A 515-amino-acid chain; its full sequence is Gap junction alpha-9 protein (515 aa).

Topologically, residues 1-19 are cytoplasmic; the sequence is MGDWNLLGDTLEEVHIHST. A helical transmembrane segment spans residues 20–40; that stretch reads MIGKIWLTILFIFRMLVLGVA. The Extracellular portion of the chain corresponds to 41–77; sequence AEDVWNDEQSGFICNTEQPGCRNVCYDQAFPISLIRY. A helical membrane pass occupies residues 78–98; sequence WVLQVIFVSSPSLVYMGHALY. The Cytoplasmic segment spans residues 99–166; the sequence is RLRVLEEERQ…YVIHIFTRSV (68 aa). The chain crosses the membrane as a helical span at residues 167 to 187; that stretch reads VEVGFMIGQYLLYGFHLEPLF. Over 188–209 the chain is Extracellular; that stretch reads KCHGHPCPNIIDCFVSRPTEKT. A helical membrane pass occupies residues 210–230; that stretch reads IFLLFMQSIATISLFLNILEI. Residues 231–515 lie on the Cytoplasmic side of the membrane; that stretch reads FHLGFKKIKR…GRRVPTDLQI (285 aa). A compositionally biased stretch (basic and acidic residues) spans 370-380; it reads KRETEGKDSKR. Disordered stretches follow at residues 370–400 and 428–472; these read KRET…GENN and SSTE…NTAD. Over residues 456–472 the composition is skewed to polar residues; sequence PPSQGDSQSLDIPNTAD.

This sequence belongs to the connexin family. Alpha-type (group II) subfamily. As to quaternary structure, a connexon is composed of a hexamer of connexins. In terms of tissue distribution, highly abundant in skeletal muscle. Also detected in testis.

It is found in the cell membrane. It localises to the cell junction. The protein localises to the gap junction. One gap junction consists of a cluster of closely packed pairs of transmembrane channels, the connexons, through which materials of low MW diffuse from one cell to a neighboring cell. In Homo sapiens (Human), this protein is Gap junction alpha-9 protein (GJA9).